We begin with the raw amino-acid sequence, 527 residues long: Ribonuclease Y (527 aa).

Residues Ile-21–Val-41 traverse the membrane as a helical segment. The tract at residues Arg-78–Glu-97 is disordered. The KH domain occupies Thr-217–Val-302. The 94-residue stretch at Val-343–Ala-436 folds into the HD domain.

It belongs to the RNase Y family.

It localises to the cell membrane. In terms of biological role, endoribonuclease that initiates mRNA decay. In Dehalococcoides mccartyi (strain ATCC BAA-2100 / JCM 16839 / KCTC 5957 / BAV1), this protein is Ribonuclease Y.